Reading from the N-terminus, the 34-residue chain is uncharacterized protein (34 aa).

Positions 1–34 (MRLRRLFKQPSTRVLGVTNCPRQQGHQKRREQPD) are disordered. Residues 25 to 34 (GHQKRREQPD) show a composition bias toward basic residues.

This is an uncharacterized protein from Schizosaccharomyces pombe (strain 972 / ATCC 24843) (Fission yeast).